The primary structure comprises 601 residues: NADH-quinone oxidoreductase subunit C/D (601 aa).

An NADH dehydrogenase I subunit C region spans residues 1-191; it reads MKLTREFPSN…DPFMLDAVKQ (191 aa). Positions 215-601 are NADH dehydrogenase I subunit D; it reads DYMFLNLGPN…IDFVMSDVDR (387 aa).

This sequence in the N-terminal section; belongs to the complex I 30 kDa subunit family. It in the C-terminal section; belongs to the complex I 49 kDa subunit family. In terms of assembly, NDH-1 is composed of 13 different subunits. Subunits NuoB, CD, E, F, and G constitute the peripheral sector of the complex.

It is found in the cell inner membrane. The enzyme catalyses a quinone + NADH + 5 H(+)(in) = a quinol + NAD(+) + 4 H(+)(out). In terms of biological role, NDH-1 shuttles electrons from NADH, via FMN and iron-sulfur (Fe-S) centers, to quinones in the respiratory chain. The immediate electron acceptor for the enzyme in this species is believed to be ubiquinone. Couples the redox reaction to proton translocation (for every two electrons transferred, four hydrogen ions are translocated across the cytoplasmic membrane), and thus conserves the redox energy in a proton gradient. This is NADH-quinone oxidoreductase subunit C/D from Aeromonas hydrophila subsp. hydrophila (strain ATCC 7966 / DSM 30187 / BCRC 13018 / CCUG 14551 / JCM 1027 / KCTC 2358 / NCIMB 9240 / NCTC 8049).